Consider the following 291-residue polypeptide: Shikimate dehydrogenase (NADP(+)) (291 aa).

Shikimate contacts are provided by residues 26–28 and S73; that span reads SLS. Catalysis depends on K77, which acts as the Proton acceptor. Residues N98 and D113 each contribute to the shikimate site. NADP(+) is bound by residues 137 to 141 and V238; that span reads GAGGA. Y240 serves as a coordination point for shikimate. Position 261 (G261) interacts with NADP(+).

Belongs to the shikimate dehydrogenase family. As to quaternary structure, homodimer.

It carries out the reaction shikimate + NADP(+) = 3-dehydroshikimate + NADPH + H(+). It participates in metabolic intermediate biosynthesis; chorismate biosynthesis; chorismate from D-erythrose 4-phosphate and phosphoenolpyruvate: step 4/7. Involved in the biosynthesis of the chorismate, which leads to the biosynthesis of aromatic amino acids. Catalyzes the reversible NADPH linked reduction of 3-dehydroshikimate (DHSA) to yield shikimate (SA). This is Shikimate dehydrogenase (NADP(+)) from Listeria innocua serovar 6a (strain ATCC BAA-680 / CLIP 11262).